Reading from the N-terminus, the 146-residue chain is Hemoglobin subunit beta (146 aa).

The residue at position 1 (V1) is an N-acetylvaline. The region spanning 2-146 is the Globin domain; that stretch reads HLTPEEKNAV…VANALAHKYH (145 aa). Residue T12 is modified to Phosphothreonine. S44 is subject to Phosphoserine. K59 carries the N6-acetyllysine modification. Residue H63 coordinates heme b. K82 is modified (N6-acetyllysine). Position 92 (H92) interacts with heme b. C93 bears the S-nitrosocysteine mark. K144 bears the N6-acetyllysine mark.

The protein belongs to the globin family. In terms of assembly, heterotetramer of two alpha chains and two beta chains. As to expression, red blood cells.

Involved in oxygen transport from the lung to the various peripheral tissues. The polypeptide is Hemoglobin subunit beta (HBB) (Theropithecus gelada (Gelada baboon)).